The following is a 315-amino-acid chain: Calumenin (315 aa).

Residues 1-19 form the signal peptide; it reads MDLRQFLLCLSLCTAFALS. Tyrosine 47 carries the post-translational modification Phosphotyrosine. Phosphothreonine is present on threonine 65. 6 consecutive EF-hand domains span residues 68 to 103, 104 to 139, 151 to 186, 188 to 223, 229 to 264, and 265 to 300; these read ESKERLGKIVSKIDDDKDGFVTVDELKGWIKFAQKR, WIHEDVERQWKGHDLNEDGLVSWEEYKNATYGYVLD, QMMVRDERRFKMADKDGDLIATKEEFTAFPHPDEYD, MKDIVVQETMEDIDKNADGFIDLEEYIGDMYSHDGN, WVKTEREQFVEFRDKNRDGRMDKEETKDWILPSDYD, and HAEAEARHLVYESDQNKDGKLTKEEIVDKYDLFVGS. Serine 69 is subject to Phosphoserine. Residues aspartate 81, aspartate 83, aspartate 85, glutamate 92, aspartate 117, asparagine 119, aspartate 121, and glutamate 128 each contribute to the Ca(2+) site. Asparagine 131 carries an N-linked (GlcNAc...) asparagine glycan. Aspartate 164 contacts Ca(2+). At lysine 165 the chain carries N6-acetyllysine. Ca(2+) is bound by residues aspartate 166, aspartate 168, glutamate 175, aspartate 201, asparagine 203, aspartate 205, glutamate 212, aspartate 242, asparagine 244, aspartate 246, arginine 248, and glutamate 253. Position 254 is a phosphothreonine (threonine 254). Serine 261 and serine 277 each carry phosphoserine. Ca(2+)-binding residues include aspartate 278, asparagine 280, aspartate 282, lysine 284, and glutamate 289. Residues 312–315 carry the Prevents secretion from ER motif; the sequence is HDEF.

It belongs to the CREC family. In terms of assembly, interacts with GGCX.

It is found in the endoplasmic reticulum membrane. The protein localises to the golgi apparatus. Its subcellular location is the secreted. The protein resides in the melanosome. It localises to the sarcoplasmic reticulum lumen. In terms of biological role, involved in regulation of vitamin K-dependent carboxylation of multiple N-terminal glutamate residues. Seems to inhibit gamma-carboxylase GGCX. Binds 7 calcium ions with a low affinity. This is Calumenin (CALU) from Mesocricetus auratus (Golden hamster).